The chain runs to 395 residues: Chorismate synthase (395 aa).

Residues Arg40 and Arg46 each contribute to the NADP(+) site. Residues 137-139, Gly308, 323-327, and Arg349 contribute to the FMN site; these read RSS and KPLPT.

This sequence belongs to the chorismate synthase family. Homotetramer. It depends on FMNH2 as a cofactor.

The catalysed reaction is 5-O-(1-carboxyvinyl)-3-phosphoshikimate = chorismate + phosphate. The protein operates within metabolic intermediate biosynthesis; chorismate biosynthesis; chorismate from D-erythrose 4-phosphate and phosphoenolpyruvate: step 7/7. Catalyzes the anti-1,4-elimination of the C-3 phosphate and the C-6 proR hydrogen from 5-enolpyruvylshikimate-3-phosphate (EPSP) to yield chorismate, which is the branch point compound that serves as the starting substrate for the three terminal pathways of aromatic amino acid biosynthesis. This reaction introduces a second double bond into the aromatic ring system. This Gloeobacter violaceus (strain ATCC 29082 / PCC 7421) protein is Chorismate synthase.